A 591-amino-acid polypeptide reads, in one-letter code: uncharacterized protein (591 aa).

The segment covering 1 to 10 (MSIRGVGGNG) has biased composition (gly residues). Disordered regions lie at residues 1–37 (MSIR…KVED), 110–135 (RSSA…GYRE), 324–344 (EESG…AQGP), and 487–517 (GHYQ…TPPL). Residues 11 to 32 (NSRIPSHNGDGSNRRSQNTKGN) show a composition bias toward polar residues. Low complexity predominate over residues 110 to 132 (RSSATRAAESGSSSRTARGASSG). The span at 490–507 (QDPRASDYDLPRASDYDL) shows a compositional bias: basic and acidic residues.

This sequence to C.muridarum TC_0268.

This is an uncharacterized protein from Chlamydia trachomatis serovar D (strain ATCC VR-885 / DSM 19411 / UW-3/Cx).